A 323-amino-acid polypeptide reads, in one-letter code: Phosphoribosylaminoimidazole-succinocarboxamide synthase (323 aa).

Belongs to the SAICAR synthetase family.

It catalyses the reaction 5-amino-1-(5-phospho-D-ribosyl)imidazole-4-carboxylate + L-aspartate + ATP = (2S)-2-[5-amino-1-(5-phospho-beta-D-ribosyl)imidazole-4-carboxamido]succinate + ADP + phosphate + 2 H(+). Its pathway is purine metabolism; IMP biosynthesis via de novo pathway; 5-amino-1-(5-phospho-D-ribosyl)imidazole-4-carboxamide from 5-amino-1-(5-phospho-D-ribosyl)imidazole-4-carboxylate: step 1/2. This Azobacteroides pseudotrichonymphae genomovar. CFP2 protein is Phosphoribosylaminoimidazole-succinocarboxamide synthase.